Consider the following 500-residue polypeptide: Abscisic acid 8'-hydroxylase 3 (500 aa).

A helical transmembrane segment spans residues 3–23; the sequence is ASFVIVIVISFFISLAFMCYV. A heme-binding site is contributed by Cys426.

This sequence belongs to the cytochrome P450 family. Heme is required as a cofactor.

It localises to the membrane. The enzyme catalyses 2-cis-(+)-abscisate + reduced [NADPH--hemoprotein reductase] + O2 = (+)-8'-hydroxyabscisate + oxidized [NADPH--hemoprotein reductase] + H2O + H(+). It functions in the pathway plant hormone degradation; abscisic acid degradation. In terms of biological role, involved in the oxidative degradation of abscisic acid. The chain is Abscisic acid 8'-hydroxylase 3 (CYP707A7) from Oryza sativa subsp. japonica (Rice).